A 1195-amino-acid chain; its full sequence is Probable beta-tubulin polyglutamylase (1195 aa).

Residues 1-110 (MSQKDIYNKY…QTEMTDNQNE (110 aa)) are disordered. 2 stretches are compositionally biased toward acidic residues: residues 17-27 (DQQEEDDDENQ) and 44-79 (QGED…EENN). Coiled-coil stretches lie at residues 59–103 (DEEQ…QQTE) and 144–260 (QDMD…QSEQ). Low complexity predominate over residues 80-89 (QDQQNNSESN). Polar residues predominate over residues 90–110 (LQYDKTNQKNQQTEMTDNQNE). Positions 281-343 (PKNDVDQYTG…NKKEQAKKQQ (63 aa)) are disordered. The span at 294 to 316 (DSGESDEEANNEDDDEDEDDESE) shows a compositional bias: acidic residues. Over residues 322–334 (RKNKAQLLKKKNN) the composition is skewed to basic residues. The region spanning 350-703 (KQTLVLNVAD…TCKAKNEIIN (354 aa)) is the TTL domain. ATP-binding positions include 500–503 (QRYL), K513, and D515. The c-MTBD region stretch occupies residues 674–756 (PLDSYIKKNT…GFERIFPMED (83 aa)). The tract at residues 783 to 862 (RNTKKVTEDP…ETIQCEDQEQ (80 aa)) is disordered. Over residues 825–849 (PNSQTTINKGIPGQNGQRPSSSQLN) the composition is skewed to polar residues. Residues 850–860 (EEGETIQCEDQ) are compositionally biased toward acidic residues.

Its subcellular location is the cytoplasm. It is found in the cytoskeleton. The protein resides in the cell projection. It localises to the cilium. The protein localises to the cilium basal body. In terms of biological role, probable tubulin polyglutamylase with a strong preference for beta-tubulin. This chain is Probable beta-tubulin polyglutamylase (Ttll6a), found in Tetrahymena thermophila (strain SB210).